A 287-amino-acid polypeptide reads, in one-letter code: Flagellin (287 aa).

Belongs to the bacterial flagellin family.

The protein resides in the secreted. Its subcellular location is the bacterial flagellum. Functionally, flagellin is the subunit protein which polymerizes to form the filaments of bacterial flagella. In Listeria innocua serovar 6a (strain ATCC BAA-680 / CLIP 11262), this protein is Flagellin (flaA).